A 118-amino-acid polypeptide reads, in one-letter code: Ribonuclease P protein component (118 aa).

The protein belongs to the RnpA family. As to quaternary structure, consists of a catalytic RNA component (M1 or rnpB) and a protein subunit.

It catalyses the reaction Endonucleolytic cleavage of RNA, removing 5'-extranucleotides from tRNA precursor.. RNaseP catalyzes the removal of the 5'-leader sequence from pre-tRNA to produce the mature 5'-terminus. It can also cleave other RNA substrates such as 4.5S RNA. The protein component plays an auxiliary but essential role in vivo by binding to the 5'-leader sequence and broadening the substrate specificity of the ribozyme. In Vibrio cholerae serotype O1 (strain ATCC 39541 / Classical Ogawa 395 / O395), this protein is Ribonuclease P protein component.